Reading from the N-terminus, the 385-residue chain is Phosphatidate cytidylyltransferase, mitochondrial (385 aa).

This sequence belongs to the TAM41 family. It depends on Mg(2+) as a cofactor. Requires Co(2+) as cofactor. Cu(2+) serves as cofactor.

Its subcellular location is the mitochondrion inner membrane. It carries out the reaction a 1,2-diacyl-sn-glycero-3-phosphate + CTP + H(+) = a CDP-1,2-diacyl-sn-glycerol + diphosphate. It participates in phospholipid metabolism; CDP-diacylglycerol biosynthesis; CDP-diacylglycerol from sn-glycerol 3-phosphate: step 3/3. Catalyzes the formation of CDP-diacylglycerol (CDP-DAG) from phosphatidic acid (PA) in the mitochondrial inner membrane. Required for the biosynthesis of the dimeric phospholipid cardiolipin, which stabilizes supercomplexes of the mitochondrial respiratory chain in the mitochondrial inner membrane. This chain is Phosphatidate cytidylyltransferase, mitochondrial (TAM41), found in Saccharomyces cerevisiae (strain ATCC 204508 / S288c) (Baker's yeast).